The sequence spans 292 residues: Polyketide transferase af380 (292 aa).

An abhydrolase domain region spans residues 46-267; sequence DVAVWFQQQG…FDLVAGRGHM (222 aa).

The protein belongs to the polyketide transferase af380 family.

The catalysed reaction is fumagillol + dodecapentaneoyl-[polyketide synthase] = prefumagillin + holo-[polyketide synthase]. It participates in secondary metabolite biosynthesis; terpenoid biosynthesis. Polyketide transferase; part of the gene cluster that mediates the biosynthesis of fumagillin, a meroterpenoid that has numerous biological activities including irreversible inhibition of human type 2 methionine aminopeptidase (METAP2). Within the pathway, the polyketide transferase af380 catalyzes the transfer of a dodecapentaenoyl group synthesized by the polyketide synthase af370 onto 5R-hydroxy-seco-sesquiterpene to produce prefumagillin. The pathway begins with the conversion of farnesyl pyrophosphate (FPP) to beta-trans-bergamotene by the membrane-bound beta-trans-bergamotene synthase af520. The multifunctional cytochrome P450 monooxygenase af510 then converts beta-trans-bergamotene into 5-keto-demethoxyfumagillol via several oxydation steps. 5-keto-demethoxyfumagillol is then subjected to successive C-6 hydroxylation and O-methylation by the dioxygenase af480 and O-methyltransferase af390-400, respectively, to yield 5-keto-fumagillol, which is then stereoselectively reduced by the keto-reductase af490 to 5R-hydroxy-seco-sesquiterpene. The next step is the polyketide transferase af380-catalyzed transfer of a dodecapentaenoyl group synthesized by the polyketide synthase af370 onto 5R-hydroxy-seco-sesquiterpene which leads to the production of prefumagillin. Finally, oxidative cleavage by the monooxygenase af470 converts prefumagillin to fumagillin. In Aspergillus fumigatus (strain ATCC MYA-4609 / CBS 101355 / FGSC A1100 / Af293) (Neosartorya fumigata), this protein is Polyketide transferase af380.